A 357-amino-acid polypeptide reads, in one-letter code: Arginine kinase (357 aa).

Ala2 carries the N-acetylalanine modification. The Phosphagen kinase N-terminal domain occupies 9–91 (KLEEGFKKLE…FDPIIEDYHK (83 aa)). 64 to 68 (GVGVY) contributes to the L-arginine binding site. The Phosphagen kinase C-terminal domain maps to 119 to 356 (FVISTRVRCG…LELIKIEKEM (238 aa)). ATP is bound by residues 122–126 (STRVR) and His185. Glu225 is a binding site for L-arginine. Arg229 contacts ATP. Cys271 is an L-arginine binding site. ATP-binding positions include 280–284 (RASVH) and 309–314 (RGTRGE). An L-arginine-binding site is contributed by Glu314.

The protein belongs to the ATP:guanido phosphotransferase family.

The enzyme catalyses L-arginine + ATP = N(omega)-phospho-L-arginine + ADP + H(+). The chain is Arginine kinase from Callinectes sapidus (Blue crab).